The sequence spans 353 residues: Protein-glutamate methylesterase/protein-glutamine glutaminase (353 aa).

The 118-residue stretch at 6 to 123 (RVLVIDDSAL…ARGLKAMLSE (118 aa)) folds into the Response regulatory domain. D57 is subject to 4-aspartylphosphate. Residues 159-351 (AESTDKVIAI…PRIVDLLSER (193 aa)) form the CheB-type methylesterase domain. Catalysis depends on residues S171, H197, and D293.

The protein belongs to the CheB family. In terms of processing, phosphorylated by CheA. Phosphorylation of the N-terminal regulatory domain activates the methylesterase activity.

It localises to the cytoplasm. It catalyses the reaction [protein]-L-glutamate 5-O-methyl ester + H2O = L-glutamyl-[protein] + methanol + H(+). The catalysed reaction is L-glutaminyl-[protein] + H2O = L-glutamyl-[protein] + NH4(+). In terms of biological role, involved in chemotaxis. Part of a chemotaxis signal transduction system that modulates chemotaxis in response to various stimuli. Catalyzes the demethylation of specific methylglutamate residues introduced into the chemoreceptors (methyl-accepting chemotaxis proteins or MCP) by CheR. Also mediates the irreversible deamidation of specific glutamine residues to glutamic acid. The chain is Protein-glutamate methylesterase/protein-glutamine glutaminase from Syntrophotalea carbinolica (strain DSM 2380 / NBRC 103641 / GraBd1) (Pelobacter carbinolicus).